The chain runs to 64 residues: Large ribosomal subunit protein uL29 (64 aa).

The protein belongs to the universal ribosomal protein uL29 family.

This is Large ribosomal subunit protein uL29 from Pseudomonas entomophila (strain L48).